A 428-amino-acid polypeptide reads, in one-letter code: MNHGVYQNLFIDSLDSVDPQIAEVLDLELRRQRDFLEMIASENFVPRAILQAQGSVLTNKYAEGYPQNRYYGGCECVDLAEDLAISRVRDLFGSEFANVQPHSGSTANAAALMALTEVGSTIMGLELDHGGHLTHGMPLSFSGKHYKAVTYRLDPKTCLIDMDSVRDLALRHRPSVIIAGWSAYVRHLDFEAFRSIADEVGARLWVDMAHFAGLVAAGLYPSPIPWADVVTSTTHKTLAGPRGGFILAKKEFGKAINTAVFPGQQGGPLMHVIAAKAVAFKVAASEGFRERQRITIEAARTVAKRIGEDYRLRDRGIDILTGGTDVHMVLVDMRKSDMDGLTGQNLLHEVGVTVNRNSMPYDKRPPRITSGIRIGTPALVTRGLSLDEFDEVADIISNALLTIDLPKQKQRALRIARTHPVYEGLRQY.

(6S)-5,6,7,8-tetrahydrofolate is bound by residues leucine 127 and 131–133 (GHL). N6-(pyridoxal phosphate)lysine is present on lysine 236.

The protein belongs to the SHMT family. Homodimer. Pyridoxal 5'-phosphate is required as a cofactor.

The protein resides in the cytoplasm. It carries out the reaction (6R)-5,10-methylene-5,6,7,8-tetrahydrofolate + glycine + H2O = (6S)-5,6,7,8-tetrahydrofolate + L-serine. The protein operates within one-carbon metabolism; tetrahydrofolate interconversion. It functions in the pathway amino-acid biosynthesis; glycine biosynthesis; glycine from L-serine: step 1/1. Functionally, catalyzes the reversible interconversion of serine and glycine with tetrahydrofolate (THF) serving as the one-carbon carrier. This reaction serves as the major source of one-carbon groups required for the biosynthesis of purines, thymidylate, methionine, and other important biomolecules. Also exhibits THF-independent aldolase activity toward beta-hydroxyamino acids, producing glycine and aldehydes, via a retro-aldol mechanism. The protein is Serine hydroxymethyltransferase of Tropheryma whipplei (strain TW08/27) (Whipple's bacillus).